The chain runs to 360 residues: S-adenosylmethionine:tRNA ribosyltransferase-isomerase (360 aa).

The protein belongs to the QueA family. In terms of assembly, monomer.

The protein resides in the cytoplasm. The enzyme catalyses 7-aminomethyl-7-carbaguanosine(34) in tRNA + S-adenosyl-L-methionine = epoxyqueuosine(34) in tRNA + adenine + L-methionine + 2 H(+). It functions in the pathway tRNA modification; tRNA-queuosine biosynthesis. Its function is as follows. Transfers and isomerizes the ribose moiety from AdoMet to the 7-aminomethyl group of 7-deazaguanine (preQ1-tRNA) to give epoxyqueuosine (oQ-tRNA). This chain is S-adenosylmethionine:tRNA ribosyltransferase-isomerase, found in Burkholderia pseudomallei (strain 1106a).